Reading from the N-terminus, the 340-residue chain is MVEQIKDKLGRPIRDLRLSVTDRCNFRCDYCMPKEVFGDDFVFLPKNELLTFDEMARIAKVYAELGVKKIRITGGEPLMRRDLDVLIAKLNQIDGIEDIGLTTNGLLLKKHGQKLYDAGLRRINVSLDAIDDTLFQSINNRNIKATTILEQIDYATSIGLNVKVNVVIQKGINDDQIIPMLEYFKDKHIEIRFIEFMDVGNDNGWDFSKVVTKDEMLTMIEQHFEIDPVEPKYFGEVAKYYRHKDNGVQFGLITSVSQSFCSTCTRARLSSDGKFYGCLFATVDGFNVKAFIRSGVTDEELKEQFKALWQIRDDRYSDERTAQTVANRQRKKINMNYIGG.

The Radical SAM core domain maps to 8–227 (KLGRPIRDLR…TMIEQHFEID (220 aa)). Residue arginine 17 coordinates GTP. Cysteine 24 and cysteine 28 together coordinate [4Fe-4S] cluster. Tyrosine 30 serves as a coordination point for S-adenosyl-L-methionine. Residue cysteine 31 coordinates [4Fe-4S] cluster. Arginine 71 contacts GTP. S-adenosyl-L-methionine is bound at residue glycine 75. GTP is bound at residue threonine 102. Serine 126 lines the S-adenosyl-L-methionine pocket. Lysine 163 provides a ligand contact to GTP. S-adenosyl-L-methionine is bound at residue methionine 197. Residues cysteine 261 and cysteine 264 each coordinate [4Fe-4S] cluster. GTP is bound at residue 266-268 (RAR). A [4Fe-4S] cluster-binding site is contributed by cysteine 278.

The protein belongs to the radical SAM superfamily. MoaA family. In terms of assembly, monomer and homodimer. [4Fe-4S] cluster serves as cofactor.

It catalyses the reaction GTP + AH2 + S-adenosyl-L-methionine = (8S)-3',8-cyclo-7,8-dihydroguanosine 5'-triphosphate + 5'-deoxyadenosine + L-methionine + A + H(+). Its pathway is cofactor biosynthesis; molybdopterin biosynthesis. In terms of biological role, catalyzes the cyclization of GTP to (8S)-3',8-cyclo-7,8-dihydroguanosine 5'-triphosphate. This is GTP 3',8-cyclase from Staphylococcus aureus (strain USA300).